A 1342-amino-acid polypeptide reads, in one-letter code: MVYSYTEKKRIRKDFGKRPQVLDIPYLLSIQLDSFQKFIEQDPEGQHGLEAAFRSVFPIKSYSGNSELQYVSYRLGEPVFDVKECQIRGVTFSAPLRVKLRLVIYEREAPEGTVKDIKEQEVYMGEIPLMTDNGTFVINGTERVIVSQLHRSPGVFFDSDKGKTHSSGKVLYNARIIPYRGSWLDFEFDPKDNLFVRIDRRRKLPATIILRALGYSTAQILDLFFDKIVYEINGNKLQMDLVPERLRGETASFDIEANGKVYIEKGRRITARHIRQLEKDSIERIEVPVEYIAGKVLSKDYIDESTGELIGAANMELSLDLLAKLSQSGHKRIETLFTNDLDHGAYMSETVRVDPSSDRLSALVEIYRMMRPGEPPTREAAETLFENLFFSEDRYDLSAVGRMKFNRSLLRDEIEGSGILSKDDIIEVMKKLIDIRNGKGEVDDIDHLGNRRIRSVGEMAENQFRVGLVRVERAVKERLSLGDLDTLMPQDMINAKPISAAVKEFFGSSQLSQFMDQNNPLSEITHKRRISALGPGGLTRERAGFEVRDVHPTHYGRVCPIETPEGPNIGLINSLSVYAQTNEYGFLETPYRRVRENVVTDEIHYLSAIEEGNFVIAQANTNLDEEGRFIDELVTCRNKGESSLFSRDQVEYMDVSTQQIVSVGASLIPFLEHDDANRALMGANMQRQAVPTLRADKPLVGTGMERAVAVDSGVTAVAKRGGTVQYVDASRIVIRVNDDEMYPGEAGIDIYNLTKYTRSNQNTCISQMPCVSLGEPVERGDVLADGPSTDLGELALGQNMRVAFMPWNGYNFEDSILVSERVVQEDRFTTIHIQELACVSRDTKLGPEEITADIPNVGEAALSKLDESGIVYIGAEVTGGDILVGKVTPKGETQLTPEEKLLRAIFGEKASDVKDSSLRVPNGVSGTIIDVQVFTRDGVEKDKRALEIEEMQLKQAKKDLTEELQILEAGLFGRIHAVLVSGGVEADKLDKLPRERWLELGLTDEDKQNQLEQLAEQYDELKHEFEKKLEAKRRKITQGDDLAPGVLKIVKVYLAVKRQIQPGDKMAGRHGNKGVISKINPIEDMPYDENGTPVDIVLNPLGVPSRMNIGQILETHLGMAAKGIGEKINAMLKQHEEVTKLREFIQRAYDLGDDLRQKVDLSTFSDEEVMRLAENLKKGMPIATPVFDGAKEKEIKELLQMGGIPTSGQITLYDGRTGEQFERQVTVGYMYMLKLNHLVDDKMHARSTGSYSLVTQQPLGGKAQFGGQRFGEMEVWALEAYGAAYTLQEMLTVKSDDVNGRTKMYKNIVDGNHQMEPGMPESFNVLLKEIRSLGINIELEEK.

This sequence belongs to the RNA polymerase beta chain family. The RNAP catalytic core consists of 2 alpha, 1 beta, 1 beta' and 1 omega subunit. When a sigma factor is associated with the core the holoenzyme is formed, which can initiate transcription.

The enzyme catalyses RNA(n) + a ribonucleoside 5'-triphosphate = RNA(n+1) + diphosphate. In terms of biological role, DNA-dependent RNA polymerase catalyzes the transcription of DNA into RNA using the four ribonucleoside triphosphates as substrates. In Pectobacterium atrosepticum (strain SCRI 1043 / ATCC BAA-672) (Erwinia carotovora subsp. atroseptica), this protein is DNA-directed RNA polymerase subunit beta.